A 164-amino-acid chain; its full sequence is Transmembrane protein B169L (164 aa).

The next 2 helical transmembrane spans lie at asparagine 28–cysteine 48 and threonine 60–asparagine 80. N-linked (GlcNAc...) asparagine; by host glycosylation occurs at asparagine 88. Residues serine 114–alanine 142 are disordered.

The protein belongs to the asfivirus B169L family.

It is found in the host membrane. The protein localises to the virion. This Ornithodoros (relapsing fever ticks) protein is Transmembrane protein B169L.